A 54-amino-acid polypeptide reads, in one-letter code: Potassium channel toxin alpha-KTx 14.5 (54 aa).

The signal sequence occupies residues 1–23 (MKIFFAILLILAVCSMAIWTVNG). 3 disulfides stabilise this stretch: Cys30–Cys46, Cys36–Cys51, and Cys40–Cys53.

It belongs to the short scorpion toxin superfamily. Potassium channel inhibitor family. Alpha-KTx 14 subfamily. In terms of tissue distribution, expressed by the venom gland.

It localises to the secreted. In terms of biological role, inhibits potassium channels. May be active towards small conductance calcium-activated potassium channels (KCNN, SK), and less active towards voltage-gated potassium channels (Kv/KCN). This chain is Potassium channel toxin alpha-KTx 14.5, found in Mesobuthus gibbosus (Mediterranean checkered scorpion).